Reading from the N-terminus, the 216-residue chain is Acetate CoA-transferase subunit beta (216 aa).

Glutamate 46 is a catalytic residue.

It belongs to the 3-oxoacid CoA-transferase subunit B family. Heterotetramer composed of two alpha subunits (AtoD) and two beta subunits (AtoA).

It is found in the cytoplasm. The enzyme catalyses an acyl-CoA + acetate = a carboxylate + acetyl-CoA. The catalysed reaction is acetoacetate + acetyl-CoA = acetoacetyl-CoA + acetate. It carries out the reaction butanoate + acetyl-CoA = butanoyl-CoA + acetate. It catalyses the reaction acetoacetate + butanoyl-CoA = acetoacetyl-CoA + butanoate. Its pathway is lipid metabolism; short-chain fatty acid metabolism. With respect to regulation, inhibited by p-chloromercuribenzoate. Coenzyme A transferase which is involved in short-chain fatty acid degradation and catalyzes the activation of short-chain fatty acids to their respective CoA thiolesters. During acetoacetate degradation, catalyzes the transfer of CoA from acetyl-CoA to acetoacetate by a mechanism involving a covalent enzyme-CoA compound as a reaction intermediate. Utilizes a variety of short chain acyl-CoA and carboxylic acid substrates but exhibits maximal activity with normal and 3-keto substrates. The chain is Acetate CoA-transferase subunit beta from Escherichia coli (strain K12).